Here is a 1167-residue protein sequence, read N- to C-terminus: Chromosome partition protein Smc (1167 aa).

ATP is bound at residue 32–39 (PNGCGKSN). Coiled-coil stretches lie at residues 170 to 274 (ISKY…RIET), 310 to 390 (QREL…HNRD), 468 to 500 (GLQE…LETL), 653 to 870 (ALLR…ERAL), and 982 to 1011 (EYLD…ETRG).

This sequence belongs to the SMC family. Homodimer.

The protein resides in the cytoplasm. Functionally, required for chromosome condensation and partitioning. This Xanthomonas oryzae pv. oryzae (strain KACC10331 / KXO85) protein is Chromosome partition protein Smc.